The chain runs to 79 residues: Sulfur carrier protein TusA (79 aa).

The active-site Cysteine persulfide intermediate is C17.

The protein belongs to the sulfur carrier protein TusA family.

It localises to the cytoplasm. In terms of biological role, sulfur carrier protein which probably makes part of a sulfur-relay system. The chain is Sulfur carrier protein TusA from Actinobacillus pleuropneumoniae serotype 7 (strain AP76).